We begin with the raw amino-acid sequence, 488 residues long: MSKTASVGLWDQPKPFFMIFFVELWERFGFYGVQGILAIYFVQQLGFSEEQSFITFGAFTALVYGLISVGGYVGDHILGTKRTIVLGAIVMAIGYYMIGLSIMKPELIFYALGTVAVGNGLFKANPASLLAKCYQPQDPRLDGAFTLFYMSINLGSLFSLSLAPVIAEKYGYTVTYNICGIGLIIALLVYIACRRMVHNIGSAPDHHPVKPIGLIAVLIGSVVMVGVCAWLLHNIKVANIALFAITTIVVLIFFWQAFKQNRVGRNKMFVAFILMLQAVVFFILYNQMPMSLNFFAINNVHHQILGFDVNPVSFQAFNPFWIIIVSPILAVVYTKLGAKGKDFSMPAKFTFGMFLCSLGFLTAAASGLFADAQGITSPWFIVLVYLFQSVGELMISALGLAMVAAFVPSYLTGFILGMWFLSQAVASMLASHVAALTATPVGVTDPLQTLPIYMSVFGKIGVATLIVAIIMTFMVPWLNRIMREEVKA.

Topologically, residues 1 to 27 are cytoplasmic; that stretch reads MSKTASVGLWDQPKPFFMIFFVELWER. Residues 28–48 form a helical membrane-spanning segment; it reads FGFYGVQGILAIYFVQQLGFS. The Periplasmic segment spans residues 49–52; it reads EEQS. A helical transmembrane segment spans residues 53–73; the sequence is FITFGAFTALVYGLISVGGYV. At 74–82 the chain is on the cytoplasmic side; it reads GDHILGTKR. A helical membrane pass occupies residues 83–103; it reads TIVLGAIVMAIGYYMIGLSIM. Over 104-106 the chain is Periplasmic; the sequence is KPE. Residues 107 to 127 form a helical membrane-spanning segment; that stretch reads LIFYALGTVAVGNGLFKANPA. The Cytoplasmic portion of the chain corresponds to 128–146; the sequence is SLLAKCYQPQDPRLDGAFT. A helical transmembrane segment spans residues 147 to 167; that stretch reads LFYMSINLGSLFSLSLAPVIA. At 168-172 the chain is on the periplasmic side; sequence EKYGY. A helical membrane pass occupies residues 173–193; the sequence is TVTYNICGIGLIIALLVYIAC. Residues 194–211 are Cytoplasmic-facing; it reads RRMVHNIGSAPDHHPVKP. The chain crosses the membrane as a helical span at residues 212 to 232; the sequence is IGLIAVLIGSVVMVGVCAWLL. The Periplasmic portion of the chain corresponds to 233 to 234; the sequence is HN. A helical transmembrane segment spans residues 235–255; that stretch reads IKVANIALFAITTIVVLIFFW. At 256–267 the chain is on the cytoplasmic side; the sequence is QAFKQNRVGRNK. Residues 268 to 288 form a helical membrane-spanning segment; sequence MFVAFILMLQAVVFFILYNQM. Residues 289-311 are Periplasmic-facing; it reads PMSLNFFAINNVHHQILGFDVNP. A helical membrane pass occupies residues 312–332; that stretch reads VSFQAFNPFWIIIVSPILAVV. The Cytoplasmic portion of the chain corresponds to 333-348; that stretch reads YTKLGAKGKDFSMPAK. Residues 349–369 traverse the membrane as a helical segment; sequence FTFGMFLCSLGFLTAAASGLF. Over 370-378 the chain is Periplasmic; it reads ADAQGITSP. Residues 379–399 form a helical membrane-spanning segment; the sequence is WFIVLVYLFQSVGELMISALG. Residues 400 to 423 lie on the Cytoplasmic side of the membrane; sequence LAMVAAFVPSYLTGFILGMWFLSQ. The helical transmembrane segment at 424–444 threads the bilayer; it reads AVASMLASHVAALTATPVGVT. The Periplasmic portion of the chain corresponds to 445–455; that stretch reads DPLQTLPIYMS. The helical transmembrane segment at 456–476 threads the bilayer; that stretch reads VFGKIGVATLIVAIIMTFMVP. Over 477–488 the chain is Cytoplasmic; sequence WLNRIMREEVKA.

It belongs to the major facilitator superfamily. Proton-dependent oligopeptide transporter (POT/PTR) (TC 2.A.17) family. DtpB subfamily.

It localises to the cell inner membrane. In terms of biological role, proton-dependent permease that transports di- and tripeptides. This is Dipeptide and tripeptide permease B from Xenorhabdus bovienii (strain SS-2004) (Xenorhabdus nematophila subsp. bovienii).